The primary structure comprises 365 residues: 3-dehydroquinate synthase (365 aa).

NAD(+) contacts are provided by residues 69-74 (DGEAHK), 103-107 (GVIGD), 127-128 (TT), Lys-140, Lys-149, and 167-170 (TLNT). 3 residues coordinate Zn(2+): Glu-182, His-245, and His-262.

It belongs to the sugar phosphate cyclases superfamily. Dehydroquinate synthase family. Requires Co(2+) as cofactor. The cofactor is Zn(2+). NAD(+) serves as cofactor.

It localises to the cytoplasm. It carries out the reaction 7-phospho-2-dehydro-3-deoxy-D-arabino-heptonate = 3-dehydroquinate + phosphate. It functions in the pathway metabolic intermediate biosynthesis; chorismate biosynthesis; chorismate from D-erythrose 4-phosphate and phosphoenolpyruvate: step 2/7. Functionally, catalyzes the conversion of 3-deoxy-D-arabino-heptulosonate 7-phosphate (DAHP) to dehydroquinate (DHQ). The sequence is that of 3-dehydroquinate synthase from Pseudomonas putida (strain W619).